The primary structure comprises 346 residues: Methylthioribose-1-phosphate isomerase (346 aa).

Residues 54 to 56 (RGA), arginine 91, and glutamine 192 contribute to the substrate site. The Proton donor role is filled by aspartate 233. Substrate is bound at residue 243–244 (NK).

Belongs to the eIF-2B alpha/beta/delta subunits family. MtnA subfamily.

The catalysed reaction is 5-(methylsulfanyl)-alpha-D-ribose 1-phosphate = 5-(methylsulfanyl)-D-ribulose 1-phosphate. Its pathway is amino-acid biosynthesis; L-methionine biosynthesis via salvage pathway; L-methionine from S-methyl-5-thio-alpha-D-ribose 1-phosphate: step 1/6. Functionally, catalyzes the interconversion of methylthioribose-1-phosphate (MTR-1-P) into methylthioribulose-1-phosphate (MTRu-1-P). This is Methylthioribose-1-phosphate isomerase from Yersinia pseudotuberculosis serotype IB (strain PB1/+).